The chain runs to 384 residues: Endoglucanase (384 aa).

The first 25 residues, 1-25 (MTRRRLLHAGTLAGVAALLPAAALA), serve as a signal peptide directing secretion. Glu63 serves as the catalytic Proton donor. Asp124 acts as the Nucleophile in catalysis.

It belongs to the glycosyl hydrolase 8 (cellulase D) family.

Its subcellular location is the secreted. It carries out the reaction Endohydrolysis of (1-&gt;4)-beta-D-glucosidic linkages in cellulose, lichenin and cereal beta-D-glucans.. It participates in glycan metabolism; bacterial cellulose biosynthesis. Functionally, hydrolyzes carboxymethylcellulose. This is Endoglucanase (bcsZ) from Xanthomonas axonopodis pv. citri (strain 306).